The chain runs to 469 residues: Aspartyl/glutamyl-tRNA(Asn/Gln) amidotransferase subunit B (469 aa).

The protein belongs to the GatB/GatE family. GatB subfamily. Heterotrimer of A, B and C subunits.

It carries out the reaction L-glutamyl-tRNA(Gln) + L-glutamine + ATP + H2O = L-glutaminyl-tRNA(Gln) + L-glutamate + ADP + phosphate + H(+). The enzyme catalyses L-aspartyl-tRNA(Asn) + L-glutamine + ATP + H2O = L-asparaginyl-tRNA(Asn) + L-glutamate + ADP + phosphate + 2 H(+). Allows the formation of correctly charged Asn-tRNA(Asn) or Gln-tRNA(Gln) through the transamidation of misacylated Asp-tRNA(Asn) or Glu-tRNA(Gln) in organisms which lack either or both of asparaginyl-tRNA or glutaminyl-tRNA synthetases. The reaction takes place in the presence of glutamine and ATP through an activated phospho-Asp-tRNA(Asn) or phospho-Glu-tRNA(Gln). The protein is Aspartyl/glutamyl-tRNA(Asn/Gln) amidotransferase subunit B of Methanococcus aeolicus (strain ATCC BAA-1280 / DSM 17508 / OCM 812 / Nankai-3).